Consider the following 200-residue polypeptide: Type 1 fimbriae regulatory protein FimB (200 aa).

Residues 8–189 (KKRNFLTHSE…NAGRFYGIWD (182 aa)) enclose the Tyr recombinase domain. Residues Arg47, Lys72, His141, Arg144, and His167 contribute to the active site. The active-site O-(3'-phospho-DNA)-tyrosine intermediate is Tyr176.

The protein belongs to the 'phage' integrase family.

In terms of biological role, fimB is one of the 2 regulatory proteins which control the phase variation of type 1 fimbriae in E.coli. These proteins mediate the periodic inversion of a 300bp DNA segment that harbors the promoter for the fimbrial structural gene, fimA. FimB switches fimA on. The polypeptide is Type 1 fimbriae regulatory protein FimB (fimB) (Escherichia coli O157:H7).